The chain runs to 700 residues: Elongation factor G (700 aa).

Positions 8–290 constitute a tr-type G domain; the sequence is ERYRNIGISA…AVIDYLPSPV (283 aa). GTP is bound by residues 17–24, 88–92, and 142–145; these read AHIDAGKT, DTPGH, and NKMD.

It belongs to the TRAFAC class translation factor GTPase superfamily. Classic translation factor GTPase family. EF-G/EF-2 subfamily.

It is found in the cytoplasm. Its function is as follows. Catalyzes the GTP-dependent ribosomal translocation step during translation elongation. During this step, the ribosome changes from the pre-translocational (PRE) to the post-translocational (POST) state as the newly formed A-site-bound peptidyl-tRNA and P-site-bound deacylated tRNA move to the P and E sites, respectively. Catalyzes the coordinated movement of the two tRNA molecules, the mRNA and conformational changes in the ribosome. This chain is Elongation factor G, found in Leptothrix cholodnii (strain ATCC 51168 / LMG 8142 / SP-6) (Leptothrix discophora (strain SP-6)).